The sequence spans 2842 residues: Adenomatous polyposis coli protein (2842 aa).

Position 2 is an N-acetylalanine (Ala-2). Residues 2–62 (AAASYDQLLK…GSIEDETMTS (61 aa)) adopt a coiled-coil conformation. Phosphoserine occurs at positions 105 and 109. Positions 125-260 (SRESTGYLEE…ASHEAERQLE (136 aa)) form a coiled coil. Positions 238–304 (AEAERSSQSK…THSAPRRLTS (67 aa)) are disordered. Residues 239–259 (EAERSSQSKHETASHEAERQL) show a composition bias toward basic and acidic residues. Over residues 268–279 (NLATSGSGQSSA) the composition is skewed to polar residues. ARM repeat units follow at residues 451-493 (LMKL…HYSV), 503-545 (LTNL…IASV), 546-589 (LRNL…VLSA), 590-636 (LWNL…GGGI), 637-681 (LRNV…ACGT), 682-723 (LWNL…SAAA), and 724-765 (LRNL…LDAQ). A phosphoserine mark is found at Ser-742, Ser-746, and Ser-778. Residues 828–877 (VLPSSSSSRGSLDSSRSEKDRSLERERGIGLSTYHSATENPGTSSKRGLQ) form a disordered region. Low complexity predominate over residues 831 to 841 (SSSSSRGSLDS). Basic and acidic residues predominate over residues 842 to 855 (SRSEKDRSLERERG). Residues 860 to 877 (TYHSATENPGTSSKRGLQ) are compositionally biased toward polar residues. A Phosphoserine modification is found at Ser-906. Disordered regions lie at residues 921–942 (RRSS…ESSN) and 956–988 (RSSN…SEDD). Residues 931-942 (NTHNFAKSESSN) show a composition bias toward polar residues. Residues 959-969 (NDSLNSVTSSD) are compositionally biased toward low complexity. Ser-985, Ser-1036, and Ser-1040 each carry phosphoserine. The interaction with catenins stretch occupies residues 1018-1167 (ELDTPINYSL…TNYSIKYNEE (150 aa)). Disordered stretches follow at residues 1058–1078 (IKQN…VYSE), 1092–1166 (GQQE…KYNE), 1188–1249 (SQKP…CKVP), and 1306–1373 (ENDV…PEHY). Polar residues-rich tracts occupy residues 1066-1078 (SRSQ…VYSE) and 1103-1128 (RGTN…QSLC). A compositionally biased stretch (basic and acidic residues) spans 1144-1157 (RYSEEEQHEEEERP). Composition is skewed to low complexity over residues 1188–1200 (SQKP…KTPS) and 1209–1223 (NSPS…SSNA). Polar residues-rich tracts occupy residues 1224–1242 (KRQS…QTPK) and 1323–1340 (VSQS…SGLA). The segment covering 1352–1363 (SSGAKSPSKSGA) has biased composition (low complexity). Phosphoserine occurs at positions 1357, 1368, 1382, 1389, and 1392. Disordered regions lie at residues 1398 to 1474 (IASS…VSAA), 1525 to 1568 (PPVQ…SDDD), 1584 to 1609 (KSSR…KPSQ), and 1661 to 1711 (ESPP…IPDL). At Thr-1435 the chain carries Phosphothreonine. A compositionally biased stretch (pro residues) spans 1435–1444 (TPPPPPPPQP). Residues 1532-1546 (NGNETEPEQPEESNE) show a composition bias toward acidic residues. Residues 1547-1562 (NQDKEVEKPDSEKDLL) are compositionally biased toward basic and acidic residues. Ser-1565 is subject to Phosphoserine. A compositionally biased stretch (basic and acidic residues) spans 1681–1700 (EFEKRDTIPTEGRSTDEAQR). A Phosphoserine modification is found at Ser-1714. The segment covering 1748-1762 (VQQASMTSSGTNKNQ) has biased composition (polar residues). Disordered stretches follow at residues 1748 to 1950 (VQQA…EKLQ), 1963 to 2010 (RNSS…APKS), and 2043 to 2067 (SSAM…PRKV). The residue at position 1772 (Ser-1772) is a Phosphoserine. Composition is skewed to basic and acidic residues over residues 1783–1792 (YRTRVRKNTD) and 1804–1833 (SDNK…DRVR). A phosphoserine mark is found at Ser-1859, Ser-1861, and Ser-1862. The interval 1864–1891 (DFDDDDVDLSREKAELRKGKESKDSEAK) is highly charged. Basic and acidic residues predominate over residues 1871–1894 (DLSREKAELRKGKESKDSEAKVTC). The span at 1899-1911 (SSSQQSARKAQAS) shows a compositional bias: low complexity. The segment covering 1927 to 1936 (EQPTFPQSSK) has biased composition (polar residues). A compositionally biased stretch (basic and acidic residues) spans 1937–1949 (DVPDRGAATDEKL). 2 positions are modified to phosphoserine: Ser-1969 and Ser-1971. The interaction with AXIN1 stretch occupies residues 2034–2058 (EDDLLRECISSAMPKKRRPSRLKGE). 6 positions are modified to phosphoserine: Ser-2087, Ser-2092, Ser-2125, Ser-2129, Ser-2130, and Ser-2132. Disordered stretches follow at residues 2148–2173 (FHLT…PGEK), 2234–2641 (PGVR…AESK), and 2664–2842 (CPIN…VTSV). Phosphothreonine is present on Thr-2151. Residues 2167-2674 (ILKPGEKSTL…PINNPRSGRS (508 aa)) form a basic region region. Composition is skewed to polar residues over residues 2257-2272 (ASKS…TSPR) and 2283-2347 (SPIT…QLPR). A phosphoserine mark is found at Ser-2260, Ser-2270, and Ser-2283. Residues 2348–2369 (TSSPSTASTKSSGSGKMSYTSP) are compositionally biased toward low complexity. Composition is skewed to polar residues over residues 2370–2411 (GRQL…NGSN) and 2418–2427 (RMSSTKSSGS). Over residues 2459 to 2477 (SASFESLSPSSRPDSPTRS) the composition is skewed to low complexity. Phosphoserine occurs at positions 2473 and 2535. Positions 2475 to 2842 (TRSQAQTPVL…HSGSYLVTSV (368 aa)) are interaction with DLG1. The segment covering 2518–2535 (SDGRPSKRHDIARSHSES) has biased composition (basic and acidic residues). Polar residues predominate over residues 2555-2568 (SSSLPRVSTWRRTG). Ser-2569 carries the post-translational modification Phosphoserine. Low complexity predominate over residues 2569-2579 (SSSSILSASSE). The segment covering 2580-2592 (SSEKAKSEDEKHV) has biased composition (basic and acidic residues). The span at 2629 to 2638 (TTSSGAASGA) shows a compositional bias: low complexity. Composition is skewed to polar residues over residues 2668 to 2679 (NPRSGRSPTGNT) and 2702 to 2713 (GKQSVGSGSPVQ). Phosphoserine is present on residues Ser-2671 and Ser-2674. Positions 2674 to 2842 (SPTGNTPPVI…HSGSYLVTSV (169 aa)) are interaction with MAPRE1. Thr-2679 carries the phosphothreonine modification. Phosphoserine occurs at positions 2710 and 2723. Residues 2762–2773 (SSSSSSKHSSPS) show a composition bias toward low complexity. The span at 2783-2809 (FNYNPSPRKSSADSTSARPSQIPTPVG) shows a compositional bias: polar residues. The residue at position 2788 (Ser-2788) is a Phosphoserine. A Microtubule tip localization signal motif is present at residues 2802–2805 (SQIP). Residues 2840–2842 (TSV) carry the PDZ-binding motif.

The protein belongs to the adenomatous polyposis coli (APC) family. As to quaternary structure, forms homooligomers. Found in a complex consisting of ARHGEF4, APC and CTNNB1. Found in a complex composed of MACF1, APC, AXIN1, CTNNB1 and GSK3B. The complex composed, at least, of APC, CTNNB1 and GSK3B interacts with JPT1; the interaction requires the inactive form of GSK3B (phosphorylated at 'Ser-9'). Interacts with APC2. Interacts with DLG1 (via PDZ domains) and DLG3 (via PDZ domains). Interacts with alpha- and beta-catenins. Interacts with AXIN1 (via RGS domain). Interacts with ARHGEF4 (via N-terminus). Interacts (via C-terminal residues 2674-2843) with MAPRE1 (via C-terminal residues 206-211); the interaction inhibits association with and bundling of F-actin. Interacts with MAPRE2 and MAPRE3 (via C-terminus). Interacts with DIAPH1; DIAPH1 acts as a scaffold protein for MAPRE1 and APC to stabilize microtubules and promote cell migration. Interacts with DIAPH2. Interacts with SCRIB; may mediate APC targeting to adherens junctions of epithelial cells. Interacts with SPATA13 (via N-terminus and SH3 domain). Interacts with ASAP1 (via SH3 domain). Interacts (at the cell membrane) with AMER1 and AMER2 (via ARM repeats). Interacts with KHDRBS1. Interacts with actin; binds both to F-actin and actin filament bundles. Post-translationally, phosphorylated; phosphorylation enhances the F-actin bundling activity. Phosphorylated by GSK3B. In terms of processing, ubiquitinated, leading to its degradation by the proteasome. Ubiquitination is facilitated by Axin. Deubiquitinated by ZRANB1/TRABID.

Its subcellular location is the cell junction. The protein resides in the adherens junction. It localises to the cytoplasm. The protein localises to the cytoskeleton. It is found in the cell projection. Its subcellular location is the lamellipodium. The protein resides in the ruffle membrane. It localises to the cell membrane. Tumor suppressor. Promotes rapid degradation of CTNNB1 and participates in Wnt signaling as a negative regulator. APC activity is correlated with its phosphorylation state. Activates the GEF activity of SPATA13 and ARHGEF4. Plays a role in hepatocyte growth factor (HGF)-induced cell migration. Required for MMP9 up-regulation via the JNK signaling pathway in colorectal tumor cells. Associates with both microtubules and actin filaments, components of the cytoskeleton. Plays a role in mediating the organization of F-actin into ordered bundles. Functions downstream of Rho GTPases and DIAPH1 to selectively stabilize microtubules. Acts as a mediator of ERBB2-dependent stabilization of microtubules at the cell cortex. It is required for the localization of MACF1 to the cell membrane and this localization of MACF1 is critical for its function in microtubule stabilization. The protein is Adenomatous polyposis coli protein (Apc) of Rattus norvegicus (Rat).